A 481-amino-acid polypeptide reads, in one-letter code: Glutamyl-tRNA(Gln) amidotransferase subunit A (481 aa).

Residues lysine 76 and serine 151 each act as charge relay system in the active site. Serine 175 serves as the catalytic Acyl-ester intermediate.

This sequence belongs to the amidase family. GatA subfamily. Heterotrimer of A, B and C subunits.

The enzyme catalyses L-glutamyl-tRNA(Gln) + L-glutamine + ATP + H2O = L-glutaminyl-tRNA(Gln) + L-glutamate + ADP + phosphate + H(+). Functionally, allows the formation of correctly charged Gln-tRNA(Gln) through the transamidation of misacylated Glu-tRNA(Gln) in organisms which lack glutaminyl-tRNA synthetase. The reaction takes place in the presence of glutamine and ATP through an activated gamma-phospho-Glu-tRNA(Gln). This Neisseria gonorrhoeae (strain NCCP11945) protein is Glutamyl-tRNA(Gln) amidotransferase subunit A.